Reading from the N-terminus, the 371-residue chain is Surface protein P12p (371 aa).

An N-terminal signal peptide occupies residues 1–20 (MHIVSFIIFFFALFFPISIC). 6-Cys domains are found at residues 23-168 (INGV…LKKN) and 169-343 (ILYG…FSNQ). 4 disulfides stabilise this stretch: Cys-27–Cys-62, Cys-76–Cys-144, Cys-93–Cys-142, and Cys-173–Cys-245. An N-linked (GlcNAc...) asparagine glycan is attached at Asn-184. A disordered region spans residues 202 to 239 (GNNNNDDDNNDDDNNNDNNNNDNNNNNNNNNNNNNNNN). Residues 206–216 (NDDDNNDDDNN) show a composition bias toward acidic residues. Residues 217–239 (NDNNNNDNNNNNNNNNNNNNNNN) are compositionally biased toward low complexity. N-linked (GlcNAc...) asparagine glycans are attached at residues Asn-242 and Asn-246. Cystine bridges form between Cys-260–Cys-323 and Cys-271–Cys-321.

Its subcellular location is the cell surface. It is found in the cell membrane. The chain is Surface protein P12p (PFS12P) from Plasmodium falciparum (isolate 3D7).